Reading from the N-terminus, the 555-residue chain is Synaptotagmin-14 (555 aa).

Topologically, residues 1 to 24 (MAIEGGERTCGVHELICIRKVSPE) are extracellular. Residues 25–47 (AVGFLSAVGVFIILMLLLFLYIN) traverse the membrane as a helical; Signal-anchor for type III membrane protein segment. The Cytoplasmic segment spans residues 48-555 (KKFCFENVGG…VCRWHALLES (508 aa)). 2 disordered regions span residues 157 to 179 (TPPL…HLSC) and 222 to 257 (GYEE…DPEP). C2 domains follow at residues 260–379 (KYGT…SLPV) and 415–550 (SVPE…CRWH).

This sequence belongs to the synaptotagmin family. As to quaternary structure, homodimer. Can also form heterodimers. Highly expressed in fetal and adult brain tissue.

It is found in the membrane. In terms of biological role, may be involved in the trafficking and exocytosis of secretory vesicles in non-neuronal tissues. Is Ca(2+)-independent. The polypeptide is Synaptotagmin-14 (SYT14) (Homo sapiens (Human)).